The following is a 446-amino-acid chain: MSEKRRYFGTDGVRGKVGQYPITPDFVLKLGWAAGRVLAKQGTKKVIIGKDTRISGYMLESALEAGLAAAGLQATFTGPMPTPAVAYLTQTFRAEAGIVISASHNPYYDNGIKFFSSEGTKLSDEIELAIEAELDKDIECVESSELGKAVRLNDAAGRYIEFCKSTFPHKMTLAGMKIVVDCAHGATYHIAPAVFKELGAEVVAIGVEPNGTNINHEVGATDVRALQAKVVEEKAALGLGFDGDGDRIIMVDELGNKVDGDQIAYIIARDALRRGELKGGVVGTLMTNLGMENGLKQLGIPFVRAAVGDRYVMEQLLAKGWKIGAENSGHVILLDKVTTGDAIVAALQVLASVVDSEMTLNELSQGMTLYPQVLENVRFSGDSNPLEAEAVKAAVIEVETELGEKGRVLLRKSGTEPLLRVMVEGEDAELVQSSALKIADAVKANC.

Ser103 acts as the Phosphoserine intermediate in catalysis. Mg(2+)-binding residues include Ser103, Asp242, Asp244, and Asp246. A Phosphoserine modification is found at Ser103.

It belongs to the phosphohexose mutase family. Mg(2+) serves as cofactor. Post-translationally, activated by phosphorylation.

It carries out the reaction alpha-D-glucosamine 1-phosphate = D-glucosamine 6-phosphate. Its function is as follows. Catalyzes the conversion of glucosamine-6-phosphate to glucosamine-1-phosphate. The polypeptide is Phosphoglucosamine mutase (Vibrio atlanticus (strain LGP32) (Vibrio splendidus (strain Mel32))).